The chain runs to 293 residues: MASSLLILCLVLVSLASSALCAAPRRPVDVPFGRNYIPTWAFDHIKYFNGGSEIQLHLDKYTGTGFQTKGSYLFGHFSMNIKMVPGDSAGTVTAFCLSSQNAEHDEIDFEFLGNRTGQPYILQTNVFTGGKGDREQRIYLWFDPTKAYHRYSVLWNMYQIVFLVDNIPIRVFKNLKELGVKFPFNQPMKVYNSLWNADDWATRGGLEKTDWSKAPFVAEYKGFHVDGCEASVNSRFCATQGKRWWDQTEFRDLDSFQWRRLKWVRQKFTIYNYCTDRTRYPQLPPECRRNRDI.

An N-terminal signal peptide occupies residues 1 to 21 (MASSLLILCLVLVSLASSALC). The 198-residue stretch at 23 to 220 (APRRPVDVPF…WSKAPFVAEY (198 aa)) folds into the GH16 domain. The active-site Nucleophile is E106. E110 (proton donor) is an active-site residue. A xyloglucan-binding site is contributed by E110. An N-linked (GlcNAc...) asparagine glycan is attached at N114. Residues 123-125 (QTN), 133-135 (DRE), 199-200 (DW), and G204 contribute to the xyloglucan site. 2 disulfide bridges follow: C228-C237 and C274-C287. Xyloglucan is bound at residue R279.

Belongs to the glycosyl hydrolase 16 family. XTH group 1 subfamily. Post-translationally, contains at least one intrachain disulfide bond essential for its enzymatic activity. In terms of tissue distribution, predominantly expressed in the phloem fibers of growing internodes. Weakly or not expressed in the xylem. In the internode, it is expressed closer to the bottom of the internode compared to XTHA.

It is found in the secreted. The protein localises to the cell wall. It localises to the extracellular space. Its subcellular location is the apoplast. The enzyme catalyses breaks a beta-(1-&gt;4) bond in the backbone of a xyloglucan and transfers the xyloglucanyl segment on to O-4 of the non-reducing terminal glucose residue of an acceptor, which can be a xyloglucan or an oligosaccharide of xyloglucan.. Functionally, catalyzes xyloglucan endohydrolysis (XEH) and/or endotransglycosylation (XET). Cleaves and religates xyloglucan polymers, an essential constituent of the primary cell wall, and thereby participates in cell wall construction of growing tissues. In Phaseolus angularis (Azuki bean), this protein is Probable xyloglucan endotransglucosylase/hydrolase protein B (XTHB).